A 287-amino-acid polypeptide reads, in one-letter code: Nucleotide-binding protein GM21_3387 (287 aa).

8-15 (GLSGSGKS) is a binding site for ATP. GTP is bound at residue 59–62 (DIRS).

The protein belongs to the RapZ-like family.

Functionally, displays ATPase and GTPase activities. The protein is Nucleotide-binding protein GM21_3387 of Geobacter sp. (strain M21).